We begin with the raw amino-acid sequence, 811 residues long: Auxin response factor 8 (811 aa).

A DNA-binding region (TF-B3) is located at residues 126-228 (FCKTLTASDT…QLFLGIRHAT (103 aa)). 2 disordered regions span residues 467-496 (HQYLQQSASHNSDLMLQQQQQQQASRHLMH) and 544-565 (HLQQWQQQSEMPSPSFMKSDFT). 2 stretches are compositionally biased toward polar residues: residues 469–482 (YLQQSASHNSDLML) and 544–555 (HLQQWQQQSEMP). The PB1 domain maps to 705–789 (KNFVKVYKSG…WYIKILSPED (85 aa)).

This sequence belongs to the ARF family. Homodimers and heterodimers. In terms of tissue distribution, expressed in the whole plant.

The protein resides in the nucleus. In terms of biological role, auxin response factors (ARFs) are transcriptional factors that bind specifically to the DNA sequence 5'-TGTCTC-3' found in the auxin-responsive promoter elements (AuxREs). Seems to act as transcriptional activator. Formation of heterodimers with Aux/IAA proteins may alter their ability to modulate early auxin response genes expression. Regulates both stamen and gynoecium maturation. Promotes jasmonic acid production. Partially redundant with ARF6. Involved in fruit initiation. Acts as an inhibitor to stop further carpel development in the absence of fertilization and the generation of signals required to initiate fruit and seed development. The sequence is that of Auxin response factor 8 (ARF8) from Arabidopsis thaliana (Mouse-ear cress).